The primary structure comprises 420 residues: Anaerobic glycerol-3-phosphate dehydrogenase subunit B (420 aa).

Belongs to the anaerobic G-3-P dehydrogenase subunit B family. In terms of assembly, composed of a catalytic GlpA/B dimer and of membrane bound GlpC. FMN is required as a cofactor.

It catalyses the reaction a quinone + sn-glycerol 3-phosphate = dihydroxyacetone phosphate + a quinol. Its pathway is polyol metabolism; glycerol degradation via glycerol kinase pathway; glycerone phosphate from sn-glycerol 3-phosphate (anaerobic route): step 1/1. Functionally, conversion of glycerol 3-phosphate to dihydroxyacetone. Uses fumarate or nitrate as electron acceptor. The sequence is that of Anaerobic glycerol-3-phosphate dehydrogenase subunit B from Pectobacterium atrosepticum (strain SCRI 1043 / ATCC BAA-672) (Erwinia carotovora subsp. atroseptica).